A 181-amino-acid polypeptide reads, in one-letter code: Achaete-scute homolog 3 (181 aa).

A basic motif region spans residues 93–106 (AFTRKRNERERQRV). The region spanning 93 to 145 (AFTRKRNERERQRVKCVNEGYAQLRHHLPEEYLEKRLSKVETLRAAIKYINYL) is the bHLH domain. The interval 107–145 (KCVNEGYAQLRHHLPEEYLEKRLSKVETLRAAIKYINYL) is helix-loop-helix motif.

As to quaternary structure, efficient DNA binding requires dimerization with another bHLH protein. Widely expressed in fetal and adult tissues.

The protein localises to the nucleus. Functionally, transcriptional repressor. Inhibits myogenesis. Plays a role in progenitor cells which differentiate into ductal and acinar, but not myoepithelial, cell lineages in the salivary glands. Involved in the functions of the microvillar cells and Bowman's glands and probably, in a non-cell-autonomous manner, in the development or regeneration of a complete olfactory epithelium (OE). The chain is Achaete-scute homolog 3 from Homo sapiens (Human).